The following is a 320-amino-acid chain: RNA-binding protein Musashi homolog 1 (320 aa).

Residues 1-14 (MTTTVSTGATAVAT) show a composition bias toward low complexity. Positions 1–48 (MTTTVSTGATAVATLRETSPPVDGHEEARLNADSDDGSHGSQDPGKMF) are disordered. Phosphothreonine is present on T18. A phosphoserine mark is found at S19 and S34. The span at 23–38 (DGHEEARLNADSDDGS) shows a compositional bias: basic and acidic residues. 2 consecutive RRM domains span residues 45-124 (GKMF…FPKR) and 134-211 (KKVF…KAQP). Required for binding to target mRNAs stretches follow at residues 88 to 93 (FGFITF) and 177 to 182 (FGFVTF).

It belongs to the Musashi family. Expressed in the gut and in AVA, AFD, RMD, RMED, RMEV, RMER and RMEL neurons (at protein level). In the tail expressed in neurons and all the ray sensilla. Expressed in male specific C1-C4 neurons.

It localises to the cytoplasm. The protein localises to the perikaryon. RNA binding protein that regulates the expression of target mRNAs at the translation level. Binds RNA containing the 5'-[GA]U(1-3)AGU-3' motif located in the 3' UTR of the target mRNA. Binds to the mRNA of three Arp2/3 complex components arx-1, arx-2 and arx-3 and negatively regulates their translation during association learning. Plays a role in time-dependent memory loss and the retention of conditioned behavior over time, probably through negative regulation of the Arp2/3 actin cytoskeleton branching complex and regulation of synapse size. Required for two aspects of male mating behavior: turning around the hermaphrodite head or tail and vulva location. This chain is RNA-binding protein Musashi homolog 1, found in Caenorhabditis elegans.